The chain runs to 239 residues: Lactate utilization protein A (239 aa).

Belongs to the LutA/YkgE family.

In terms of biological role, is involved in L-lactate degradation and allows cells to grow with lactate as the sole carbon source. The protein is Lactate utilization protein A of Bacillus cereus (strain B4264).